A 473-amino-acid polypeptide reads, in one-letter code: Siroheme synthase (473 aa).

The segment at 1–203 (MQYLPIFTKL…GDTQAAEQQL (203 aa)) is precorrin-2 dehydrogenase /sirohydrochlorin ferrochelatase. NAD(+)-binding positions include 22–23 (DV) and 43–44 (PK). S128 carries the post-translational modification Phosphoserine. Residues 215–473 (GEVYVVGAGP…SFAQPLTDVA (259 aa)) are uroporphyrinogen-III C-methyltransferase. Residue P224 coordinates S-adenosyl-L-methionine. The active-site Proton acceptor is the D247. The active-site Proton donor is the K269. Residues 300 to 302 (GGD), I305, 330 to 331 (TA), M382, and G411 each bind S-adenosyl-L-methionine.

The protein in the N-terminal section; belongs to the precorrin-2 dehydrogenase / sirohydrochlorin ferrochelatase family. It in the C-terminal section; belongs to the precorrin methyltransferase family.

The enzyme catalyses uroporphyrinogen III + 2 S-adenosyl-L-methionine = precorrin-2 + 2 S-adenosyl-L-homocysteine + H(+). It carries out the reaction precorrin-2 + NAD(+) = sirohydrochlorin + NADH + 2 H(+). The catalysed reaction is siroheme + 2 H(+) = sirohydrochlorin + Fe(2+). The protein operates within cofactor biosynthesis; adenosylcobalamin biosynthesis; precorrin-2 from uroporphyrinogen III: step 1/1. Its pathway is cofactor biosynthesis; adenosylcobalamin biosynthesis; sirohydrochlorin from precorrin-2: step 1/1. It participates in porphyrin-containing compound metabolism; siroheme biosynthesis; precorrin-2 from uroporphyrinogen III: step 1/1. It functions in the pathway porphyrin-containing compound metabolism; siroheme biosynthesis; siroheme from sirohydrochlorin: step 1/1. The protein operates within porphyrin-containing compound metabolism; siroheme biosynthesis; sirohydrochlorin from precorrin-2: step 1/1. Multifunctional enzyme that catalyzes the SAM-dependent methylations of uroporphyrinogen III at position C-2 and C-7 to form precorrin-2 via precorrin-1. Then it catalyzes the NAD-dependent ring dehydrogenation of precorrin-2 to yield sirohydrochlorin. Finally, it catalyzes the ferrochelation of sirohydrochlorin to yield siroheme. This is Siroheme synthase from Pseudoalteromonas translucida (strain TAC 125).